Consider the following 460-residue polypeptide: CCA-adding enzyme (460 aa).

Positions 50 and 53 each coordinate ATP. CTP is bound by residues S50 and R53. 3 residues coordinate Mg(2+): D62, D64, and D117. Residues H140, K159, and Y168 each coordinate ATP. CTP is bound by residues H140, K159, and Y168.

It belongs to the tRNA nucleotidyltransferase/poly(A) polymerase family. Archaeal CCA-adding enzyme subfamily. Homodimer. Mg(2+) is required as a cofactor.

It carries out the reaction a tRNA precursor + 2 CTP + ATP = a tRNA with a 3' CCA end + 3 diphosphate. The enzyme catalyses a tRNA with a 3' CCA end + 2 CTP + ATP = a tRNA with a 3' CCACCA end + 3 diphosphate. In terms of biological role, catalyzes the addition and repair of the essential 3'-terminal CCA sequence in tRNAs without using a nucleic acid template. Adds these three nucleotides in the order of C, C, and A to the tRNA nucleotide-73, using CTP and ATP as substrates and producing inorganic pyrophosphate. tRNA 3'-terminal CCA addition is required both for tRNA processing and repair. Also involved in tRNA surveillance by mediating tandem CCA addition to generate a CCACCA at the 3' terminus of unstable tRNAs. While stable tRNAs receive only 3'-terminal CCA, unstable tRNAs are marked with CCACCA and rapidly degraded. The polypeptide is CCA-adding enzyme (Methanoregula boonei (strain DSM 21154 / JCM 14090 / 6A8)).